The sequence spans 515 residues: Maturase K (515 aa).

This sequence belongs to the intron maturase 2 family. MatK subfamily.

It localises to the plastid. The protein localises to the chloroplast. Functionally, usually encoded in the trnK tRNA gene intron. Probably assists in splicing its own and other chloroplast group II introns. This is Maturase K from Picea sitchensis (Sitka spruce).